Consider the following 271-residue polypeptide: Phosphatidate cytidylyltransferase (271 aa).

A run of 8 helical transmembrane segments spans residues 12–32 (LLPI…ALFI), 53–73 (FGRV…YHLP), 75–95 (LAGA…VLVL), 111–131 (LGMG…LKQW), 136–156 (GLII…YFSG), 174–194 (WEGV…VGLY), 199–219 (LGAL…SIVG), and 251–271 (SLTA…WGAP).

Belongs to the CDS family.

It is found in the cell inner membrane. It catalyses the reaction a 1,2-diacyl-sn-glycero-3-phosphate + CTP + H(+) = a CDP-1,2-diacyl-sn-glycerol + diphosphate. The protein operates within phospholipid metabolism; CDP-diacylglycerol biosynthesis; CDP-diacylglycerol from sn-glycerol 3-phosphate: step 3/3. The chain is Phosphatidate cytidylyltransferase (cdsA) from Pseudomonas aeruginosa (strain ATCC 15692 / DSM 22644 / CIP 104116 / JCM 14847 / LMG 12228 / 1C / PRS 101 / PAO1).